A 263-amino-acid polypeptide reads, in one-letter code: Leukocyte-associated immunoglobulin-like receptor 1 (263 aa).

The first 21 residues, 1–21 (MSLHPVILLVLVLCLGWKINT), serve as a signal peptide directing secretion. The Extracellular portion of the chain corresponds to 22–144 (QEGSLPDITI…TSWLKTYSIY (123 aa)). In terms of domain architecture, Ig-like C2-type spans 27–115 (PDITIFPNSS…TWSERSKTLE (89 aa)). Asn34 and Asn90 each carry an N-linked (GlcNAc...) asparagine glycan. A disulfide bridge links Cys49 with Cys99. A helical transmembrane segment spans residues 145–165 (IFTVVSVIFLLCLSALLFCFL). The Cytoplasmic segment spans residues 166-263 (RHRQKKQGLP…SSTYAAIIRH (98 aa)). Short sequence motifs (ITIM motif) lie at residues 226–231 (VTYIQL) and 255–260 (STYAAI). Phosphotyrosine occurs at positions 228 and 257.

Interacts with SH2 domains of tyrosine-protein phosphatases PTPN6 and PTPN11. The interaction with PTPN6 is constitutive. Interacts with the SH2 domain of CSK. Binds with high affinity to extracellular matrix collagens, the interaction is functionally important. Post-translationally, phosphorylation at Tyr-228 and Tyr-257 activates it. May be phosphorylated by LCK. In terms of processing, N-glycosylated. In terms of tissue distribution, expressed in lymphoid organs and in cell lines of hemopoietic origin.

It is found in the cell membrane. Its function is as follows. Functions as an inhibitory receptor that plays a constitutive negative regulatory role on cytolytic function of natural killer (NK) cells, B-cells and T-cells. Activation by Tyr phosphorylation results in recruitment and activation of the phosphatases PTPN6 and PTPN11. It also reduces the increase of intracellular calcium evoked by B-cell receptor ligation. May also play its inhibitory role independently of SH2-containing phosphatases. Modulates cytokine production in CD4+ T-cells, down-regulating IL2 and IFNG production while inducing secretion of transforming growth factor beta. Also down-regulates IgG and IgE production in B-cells as well as IL8, IL10 and TNF secretion. Inhibits proliferation and induces apoptosis in myeloid leukemia cell lines as well as prevents nuclear translocation of NF-kappa-B p65 subunit/RELA and phosphorylation of I-kappa-B alpha/CHUK in these cells. Inhibits the differentiation of peripheral blood precursors towards dendritic cells. The chain is Leukocyte-associated immunoglobulin-like receptor 1 (Lair1) from Mus musculus (Mouse).